The following is a 631-amino-acid chain: Phosphomethylpyrimidine synthase (631 aa).

Substrate is bound by residues asparagine 239, methionine 268, tyrosine 297, histidine 333, 353 to 355, 394 to 397, and glutamate 433; these read SRG and DGLR. Residue histidine 437 coordinates Zn(2+). Substrate is bound at residue tyrosine 460. Zn(2+) is bound at residue histidine 501. [4Fe-4S] cluster is bound by residues cysteine 581, cysteine 584, and cysteine 589.

The protein belongs to the ThiC family. Homodimer. It depends on [4Fe-4S] cluster as a cofactor.

It carries out the reaction 5-amino-1-(5-phospho-beta-D-ribosyl)imidazole + S-adenosyl-L-methionine = 4-amino-2-methyl-5-(phosphooxymethyl)pyrimidine + CO + 5'-deoxyadenosine + formate + L-methionine + 3 H(+). It participates in cofactor biosynthesis; thiamine diphosphate biosynthesis. Catalyzes the synthesis of the hydroxymethylpyrimidine phosphate (HMP-P) moiety of thiamine from aminoimidazole ribotide (AIR) in a radical S-adenosyl-L-methionine (SAM)-dependent reaction. In Escherichia coli O45:K1 (strain S88 / ExPEC), this protein is Phosphomethylpyrimidine synthase.